We begin with the raw amino-acid sequence, 283 residues long: MCNTPTYCDLGKAAKDVFNKGYGFGMVKIDLRTKSCSGVEFSTSGHAYTDTGKASGNLETKYKICDHGLTFTQKWNTDNTLGTEISLENKLAEGLKLTLDTIFVPNTGKKSGKLKASYKRECFSIGSNVDIDFAGPTIYGWAVLALEGWLAGYQMSFDTAKSKLSQNNFALGYKAADFQLHTHVNDGTEFGGSIYQKVNEKIETSINLAWTAGSNNTRFGIAAKYKLDCRTSLSAKVNNASLIGLGYTQTLRPGVKLTLSALIDGKNFSAGGHKVGLGFELEA.

Cys-2 bears the N-acetylcysteine mark. Residue Thr-4 is modified to Phosphothreonine. N6-acetyllysine occurs at positions 12, 15, and 20. The next 2 membrane-spanning stretches (beta stranded) occupy residues 26–35 (MVKIDLRTKS) and 39–47 (VEFSTSGHA). Lys-53 is covalently cross-linked (Glycyl lysine isopeptide (Lys-Gly) (interchain with G-Cter in ubiquitin)). 3 beta stranded membrane-spanning segments follow: residues 54–64 (ASGNLETKYKI), 69–76 (LTFTQKWN), and 80–89 (TLGTEISLEN). Residue Lys-90 is modified to N6-acetyllysine. The beta stranded transmembrane segment at 95–104 (LKLTLDTIFV) threads the bilayer. Glycyl lysine isopeptide (Lys-Gly) (interchain with G-Cter in ubiquitin) cross-links involve residues Lys-109 and Lys-110. 10 beta stranded membrane passes run 111 to 120 (SGKLKASYKR), 123 to 130 (FSIGSNVD), 137 to 145 (TIYGWAVLA), 150 to 158 (LAGYQMSFD), 163 to 175 (KLSQ…GYKA), 178 to 185 (FQLHTHVN), 189 to 198 (EFGGSIYQKV), 202 to 211 (IETSINLAWT), 218 to 227 (RFGIAAKYKL), and 231 to 238 (TSLSAKVN). Ser-241 bears the Phosphoserine mark. NAD(+) is bound by residues 242-244 (LIG) and 260-264 (SALID). 2 consecutive transmembrane segments (beta stranded) span residues 242–251 (LIGLGYTQTL) and 254–263 (GVKLTLSALI). N6-acetyllysine; alternate is present on Lys-266. Lys-266 is covalently cross-linked (Glycyl lysine isopeptide (Lys-Gly) (interchain with G-Cter in ubiquitin); alternate). A beta stranded transmembrane segment spans residues 273–282 (HKVGLGFELE).

This sequence belongs to the eukaryotic mitochondrial porin family. Interacts with ARMC12 in a TBC1D21-dependent manner. Interacts with MISFA. Ubiquitinated by PRKN during mitophagy, leading to its degradation and enhancement of mitophagy. Deubiquitinated by USP30.

Its subcellular location is the mitochondrion outer membrane. The protein localises to the membrane. The catalysed reaction is chloride(in) = chloride(out). It catalyses the reaction K(+)(in) = K(+)(out). Functionally, non-selective voltage-gated ion channel that mediates the transport of anions and cations through the mitochondrion outer membrane and plasma membrane. Forms a high-conducting channel with a stable open state and a voltage-induced closure with a mild preference for anions over cations. Involved in male fertility and sperm mitochondrial sheath formation. The chain is Non-selective voltage-gated ion channel VDAC3 from Sus scrofa (Pig).